The primary structure comprises 2089 residues: METESETSSLGDDSVFWLDCEGVTQLTDGDEEEREESFRKMKSSIHSEEDDFVPELHRNVHPRERPDWEETLSAMARGADVPEIPGDLTLKSCGSTASTKVKHVKKLPFTKGHFPKMAECAHFHYENVEFGSIQLSLSEEQNEVMKNGCESKELVYLVQIACQGKSWIVKRSYEDFRVLDKHLHLCIYDRRFSQLTELPRSDVLKDSPESVTQMLTAYLSRLSTIAGNKINCGPALTWMEIDNKGNHLLVHEESSINTPAVGAAHVIKRYTARAPDELTLEVGDIVSVIDMPPKVLSTWWRGKHGFQVGLFPGHCVELINQKVPQSVTNSVPKPVSKKHGKLITFLRTFMKSRPTKQKLKQRGILKERVFGCDLGEHLLNSGFEVPQVLQSCTAFIERYGIVDGIYRLSGVASNIQRLRHEFDSEHVPDLTKEPYVQDIHSVGSLCKLYFRELPNPLLTYQLYEKFSDAVSAATDEERLIKIHDVIQQLPPPHYRTLEFLMRHLSLLADYCSITNMHAKNLAIVWAPNLLRSKQIESACFSGTAAFMEVRIQSVVVEFILNHVDVLFSGKISAVMQEGAASLSRPKSLLVSSPSTKLLTLEEAQARTQAQVSSPIVTENKYIEVGEGPAALQGKFHTVIEFPLERKRPQNKMKKSPVGSWRSFFNLGKSSSVSKRKLQRNESEPSEMKAMALKGGRAEGTLRSAKSEESLTSLHAVDGDSKLFRPRRPRSSSDALSASFNGDVLGNRCNSYDNLPHDNESEEEVGLLHIPALVSPHSAEDVDLSPPDIGVASLDFDPMSFQCSPPKAESECLESGASFLDSLGYTRDKLSPSKKDAEAGGSQSQTPGSTASSEPVSPVQEKLSPFFTLDLSPTDDKSSKPSSFTEKVVYAFSPKIGRKLSKSPSMNISEPISVTLPPRVSEVIGTVSNTVAQNASPTSWDKSVEERDVINRSPTQLQLGKMKAGEREAQETCEPEAQPLEQGAAEEVELPGTEERPVLSSQSKAVPSGQSQTGAVTHDPPQDPVPVSSVSLIPPPPPPKNVARMLALALAESAQQASSQTLKRPGASQAGCTSYGDTAVVPSEEKLPSSYSSLTLDKTCFQTDRPAEQFHPQINGLGNCNQPLPEAAAMGGPTQSNTTDSGEQLHQVDLIGNSLHRNHISGDPEKARSTSAPLTDSEKSDDHGSFPEDHAGKSSVSTVSFLEQDQSPLHFSCGDQPLSYLGTSVDKPHHSSELTDKSPMPSTLPRDKAHHPLSGSPEENSSTATMAYMMATPARAEPSNSEASRVLAEQPSAADFVAATLQRTHRTNRPLPPPPSQRPAEQPPVVGQVQEAPSIGLNNSHKVQGTAPAPERPPESRAMGDPAPIFLSDGTAAAQCPMGASAPQPGLPEKVRESSRAPPLHLRAESFPGHSCGFAAPVPPTRTMESKMAAALHSSAADATSSSNYHSFVPSSASVDDVMPVPLPVSQPKHASQKIAYSSFARPDVTAEPFGPENCLHFNMTPNCQFRPQSVPPHHNKLEPHQVYGARSEPPASMGPRYNTYVAPGRNMSGHHSKPCSRVEYVSSLGSSVRNPCCPEDILPYPTIRRVQSLHAPPPSMIRSVPISRTEVPPDDEPAYCPRPVYQYKPYQSSQARSDYHVTQLQPYFENGRVHYRYSPYSSSSSSYYSPEGALCDVDAYGTVQLRPLHRLSSRDFAFYNPRLQGKNVYNYAGLPPRPRANATGYFSGNDHNVVTMPPTADGKHTYTSWDLEDMEKYRMQSIRRESRARQKVKGPIMSQYDNMTPAVQEDLGGIYVIHLRSKSDPGKTGLLSVAEGKEGRHPAKAVSPEGDERFYRKHPESEFDRAHHHGGYGSTQAEKPSLPQKQSSLRNRKLHDMGCSLPEHRAHQEASHRQLCESKNGPPYPQGAGQLDYGSKGMPDTSEPSNYHNSGKYMTSGQGSLTLNHKEVRLPKDLDRPRARQPPGPEKHSRDCYKEEEHFSQSMVPPPKPERSHSLKLHHTQNLERDPSVLYQYQTHSKRQSSMTVVSQYDNLEDYHSLPQHQRGGFGGAGMGAYVPSGFVHPQSRTYATALGQGAFLPTELSLPHPDTQIHAE.

Residues 24-52 (TQLTDGDEEEREESFRKMKSSIHSEEDDF) are disordered. Positions 131 to 245 (GSIQLSLSEE…LTWMEIDNKG (115 aa)) constitute a PX; atypical domain. Residues 259–321 (PAVGAAHVIK…PGHCVELINQ (63 aa)) enclose the SH3 domain. Residues 372-567 (CDLGEHLLNS…FILNHVDVLF (196 aa)) enclose the Rho-GAP domain. Phosphoserine occurs at positions 706, 709, 732, and 738. The span at 828–837 (KLSPSKKDAE) shows a compositional bias: basic and acidic residues. The segment at 828-858 (KLSPSKKDAEAGGSQSQTPGSTASSEPVSPV) is disordered. Residues 840-854 (GSQSQTPGSTASSEP) show a composition bias toward polar residues. Ser-852, Ser-856, Ser-892, and Ser-952 each carry phosphoserine. Disordered stretches follow at residues 955–1037 (QLQL…PPPP), 1119–1141 (CNQP…TDSG), and 1154–1197 (LHRN…SVST). 2 stretches are compositionally biased toward polar residues: residues 998–1014 (LSSQ…QTGA) and 1132–1141 (PTQSNTTDSG). A compositionally biased stretch (basic and acidic residues) spans 1175 to 1191 (DSEKSDDHGSFPEDHAG). Ser-1206 is modified (phosphoserine). The segment at 1221–1368 (GTSVDKPHHS…GDPAPIFLSD (148 aa)) is disordered. Positions 1225-1235 (DKPHHSSELTD) are enriched in basic and acidic residues. Residues 1262 to 1275 (TATMAYMMATPARA) show a composition bias toward low complexity. Positions 1395–1714 (RAPPLHLRAE…YNYAGLPPRP (320 aa)) are interaction with GAB2. 2 positions are modified to asymmetric dimethylarginine: Arg-1526 and Arg-1536. Ser-1588 carries the post-translational modification Phosphoserine. Positions 1688 to 2089 (SSRDFAFYNP…PHPDTQIHAE (402 aa)) are interaction with FYN. Disordered stretches follow at residues 1801–1865 (PGKT…QSSL) and 1881–2002 (RAHQ…LERD). Basic and acidic residues predominate over residues 1826–1841 (GDERFYRKHPESEFDR). Residues 1850-1865 (STQAEKPSLPQKQSSL) show a composition bias toward polar residues. Basic and acidic residues predominate over residues 1881–1892 (RAHQEASHRQLC). Over residues 1918–1939 (SEPSNYHNSGKYMTSGQGSLTL) the composition is skewed to polar residues. Basic and acidic residues-rich tracts occupy residues 1940 to 1954 (NHKE…DRPR) and 1961 to 1975 (PEKH…EEHF). An Omega-N-methylarginine modification is found at Arg-2039.

The protein belongs to the PX domain-containing GAP family. Interacts with NTRK1 (via cytoplasmic domain); the interaction is independent of the phosphorylation state of NTRK1. Interacts with SHC3 (via SH2 domain). Interacts with RASA1 (via SH3 domain); the interaction is necessary for the Ras activation and cell transforming activities of ARHGAP32. Interacts with GAB1 and GAB2. Interacts with CRK and CRKL. Found in a complex with CRKL and BCAR1; upon EGF stimulation BCAR1 may be replaced by EGFR. Interacts with NCK1 (via SH3 domain); NCK1 recruits phosphorylated BCAR1 to the complex. Isoform 2 interacts with FYN; the interaction appears to be dependent on tyrosine phosphorylation of ARHGAP32. Interacts with EGFR; the interaction requires EGF stimulation and is increased by SHC3. Interacts with CDC42; the interaction requires constitutively active CDC42. Interacts with CTNNB1, DLG4, CDH2 and GRIN2B. Interacts with GPHN. Isoform 2 is phosphorylated on multiple tyrosine residues by FYN. Phosphorylated tyrosine residues undergo dephosphorylation after stimulation of NMDA receptors. Phosphorylated in vitro by CaMK2 in the presence of calmodulin and calcium; which inhibits GAP activity. Isoform 1 and isoform 2 are highly expressed in brain, specially in cortex, corpus striatum, hippocampus and thalamus. Low levels in cerebellum, colon, small intestine, and kidney.

It is found in the postsynaptic density. It localises to the cell projection. The protein localises to the dendritic spine. The protein resides in the cytoplasm. Its subcellular location is the cell cortex. It is found in the endosome membrane. It localises to the golgi apparatus membrane. The protein localises to the endoplasmic reticulum membrane. The protein resides in the membrane. Functionally, GTPase-activating protein (GAP) promoting GTP hydrolysis on RHOA, CDC42 and RAC1 small GTPases. May be involved in the differentiation of neuronal cells during the formation of neurite extensions. Involved in NMDA receptor activity-dependent actin reorganization in dendritic spines. May mediate cross-talks between Ras- and Rho-regulated signaling pathways in cell growth regulation. Isoform 2 has higher GAP activity. This Mus musculus (Mouse) protein is Rho GTPase-activating protein 32 (Arhgap32).